The following is a 276-amino-acid chain: F420-dependent methylenetetrahydromethanopterin dehydrogenase (276 aa).

It belongs to the MTD family.

It carries out the reaction 5,10-methylenetetrahydromethanopterin + oxidized coenzyme F420-(gamma-L-Glu)(n) + 2 H(+) = 5,10-methenyl-5,6,7,8-tetrahydromethanopterin + reduced coenzyme F420-(gamma-L-Glu)(n). Catalyzes the oxidation of methylene-H(4)MPT to methenyl-H(4)MPT(+). The sequence is that of F420-dependent methylenetetrahydromethanopterin dehydrogenase from Methanosphaera stadtmanae (strain ATCC 43021 / DSM 3091 / JCM 11832 / MCB-3).